The primary structure comprises 545 residues: Glucose-6-phosphate isomerase (545 aa).

Glutamate 351 functions as the Proton donor in the catalytic mechanism. Active-site residues include histidine 382 and lysine 510.

The protein belongs to the GPI family.

The protein localises to the cytoplasm. It carries out the reaction alpha-D-glucose 6-phosphate = beta-D-fructose 6-phosphate. Its pathway is carbohydrate biosynthesis; gluconeogenesis. The protein operates within carbohydrate degradation; glycolysis; D-glyceraldehyde 3-phosphate and glycerone phosphate from D-glucose: step 2/4. Catalyzes the reversible isomerization of glucose-6-phosphate to fructose-6-phosphate. This Shewanella baltica (strain OS195) protein is Glucose-6-phosphate isomerase.